The chain runs to 1069 residues: Receptor-type guanylate cyclase gcy-29 (1069 aa).

A signal peptide spans 1-23 (MLPNFWNFQFIFVIFCWIPIVVS). Over 24–458 (DEKIVLKIGS…FREENCDYTQ (435 aa)) the chain is Extracellular. Asparagine 161, asparagine 240, and asparagine 407 each carry an N-linked (GlcNAc...) asparagine glycan. Residues 459-479 (TIVIATAVVCIILTVFLGIWL) form a helical membrane-spanning segment. The Cytoplasmic portion of the chain corresponds to 480-1069 (RRACETSALD…FKKKNNTFDF (590 aa)). The Protein kinase domain occupies 497–806 (RDDVQILDEE…RVRLATEIAL (310 aa)). Residues 503 to 511 (LDEEQVKSV) and lysine 527 contribute to the ATP site. The region spanning 876 to 1006 (TVMFSDIVGF…ETVNIAAVME (131 aa)) is the Guanylate cyclase domain. Positions 881, 882, and 925 each coordinate Mg(2+).

The protein belongs to the adenylyl cyclase class-4/guanylyl cyclase family. As to expression, expressed bilaterally in ASE and AFD sensory neurons.

It is found in the cell membrane. The enzyme catalyses GTP = 3',5'-cyclic GMP + diphosphate. Guanylate cyclase involved in the production of the second messenger cGMP. This is Receptor-type guanylate cyclase gcy-29 from Caenorhabditis elegans.